Reading from the N-terminus, the 243-residue chain is MSMLCYTLIIAFLIGIWAAPKSEDNVPLGSPATSDLSDTSCAQTHEGLKTSRNTDQRHPAPKKAEDQELGSVANIIVDPKLFQKRRFQSSRVLFSTQPPPLSRDEQSVEFLDNEDALNRNIRAKRETHPVHNRGEHSVCDSISVWVANKTNATDIKGNMVTVMVDVNLNNEVYKQYFFETKCRNPNPVPSGCRGIDSRHWNSYCTTTQAYVRALTMEGNRASWRFIRIDTACVCVIIRKTDNF.

The N-terminal stretch at 1–18 (MSMLCYTLIIAFLIGIWA) is a signal peptide. Residues 19–125 (APKSEDNVPL…ALNRNIRAKR (107 aa)) constitute a propeptide that is removed on maturation. The segment covering 47–66 (GLKTSRNTDQRHPAPKKAED) has biased composition (basic and acidic residues). A disordered region spans residues 47–67 (GLKTSRNTDQRHPAPKKAEDQ). 3 cysteine pairs are disulfide-bonded: Cys139/Cys204, Cys182/Cys232, and Cys192/Cys234. N-linked (GlcNAc...) asparagine glycosylation is found at Asn148 and Asn151.

It belongs to the NGF-beta family. As to quaternary structure, homodimer; non-covalently linked. As to expression, expressed by the venom gland.

It is found in the secreted. Its function is as follows. Nerve growth factor is important for the development and maintenance of the sympathetic and sensory nervous systems. It stimulates division and differentiation of sympathetic and embryonic sensory neurons as well as basal forebrain cholinergic neurons in the brain. Its relevance in the snake venom is not clear. However, it has been shown to inhibit metalloproteinase-dependent proteolysis of platelet glycoprotein Ib alpha, suggesting a metalloproteinase inhibition to prevent metalloprotease autodigestion and/or protection against prey proteases. Binds a lipid between the two protein chains in the homodimer. The lipid-bound form promotes histamine relase from mouse mast cells, contrary to the lipid-free form. This chain is Venom nerve growth factor 3, found in Tropidechis carinatus (Australian rough-scaled snake).